We begin with the raw amino-acid sequence, 233 residues long: U2 small nuclear ribonucleoprotein A' (233 aa).

LRR repeat units lie at residues 20–40 (KLTLLLRDLQITELENLAITQ), 42–63 (KYQVIDLSNNDLISLGNIPKRF), 65–86 (NLQCLLLSNNNISYIDDESFPS), and 89–110 (HITSITLFNNNIYQFQKSFKDK). The LRRCT domain maps to 122-160 (NPITEMENYRYFIIWLIPSLKVLDFKKVKQAERKTSEDM).

Belongs to the U2 small nuclear ribonucleoprotein A family. Associated with the spliceosome.

The protein localises to the nucleus. In terms of biological role, involved in pre-mRNA splicing. In Candida albicans (strain SC5314 / ATCC MYA-2876) (Yeast), this protein is U2 small nuclear ribonucleoprotein A' (LEA1).